Here is a 691-residue protein sequence, read N- to C-terminus: Elongation factor G (691 aa).

The tr-type G domain occupies 10 to 284 (KMYRNIGIMA…AIVKYLPSPL (275 aa)). GTP contacts are provided by residues 19–26 (AHIDAGKT), 83–87 (DTPGH), and 137–140 (NKMD).

The protein belongs to the TRAFAC class translation factor GTPase superfamily. Classic translation factor GTPase family. EF-G/EF-2 subfamily.

The protein resides in the cytoplasm. In terms of biological role, catalyzes the GTP-dependent ribosomal translocation step during translation elongation. During this step, the ribosome changes from the pre-translocational (PRE) to the post-translocational (POST) state as the newly formed A-site-bound peptidyl-tRNA and P-site-bound deacylated tRNA move to the P and E sites, respectively. Catalyzes the coordinated movement of the two tRNA molecules, the mRNA and conformational changes in the ribosome. The chain is Elongation factor G from Clostridium tetani (strain Massachusetts / E88).